The sequence spans 390 residues: Queuine tRNA-ribosyltransferase (390 aa).

Catalysis depends on Asp90, which acts as the Proton acceptor. Substrate-binding positions include 90–94 (DSGGF), Asp144, Gln197, and Gly224. The tract at residues 255–261 (GVGTPED) is RNA binding. Asp274 acts as the Nucleophile in catalysis. The RNA binding; important for wobble base 34 recognition stretch occupies residues 279–283 (TRNAR). Positions 312, 314, 317, and 354 each coordinate Zn(2+).

This sequence belongs to the queuine tRNA-ribosyltransferase family. As to quaternary structure, homodimer. Within each dimer, one monomer is responsible for RNA recognition and catalysis, while the other monomer binds to the replacement base PreQ1. The cofactor is Zn(2+).

It carries out the reaction 7-aminomethyl-7-carbaguanine + guanosine(34) in tRNA = 7-aminomethyl-7-carbaguanosine(34) in tRNA + guanine. Its pathway is tRNA modification; tRNA-queuosine biosynthesis. Its function is as follows. Catalyzes the base-exchange of a guanine (G) residue with the queuine precursor 7-aminomethyl-7-deazaguanine (PreQ1) at position 34 (anticodon wobble position) in tRNAs with GU(N) anticodons (tRNA-Asp, -Asn, -His and -Tyr). Catalysis occurs through a double-displacement mechanism. The nucleophile active site attacks the C1' of nucleotide 34 to detach the guanine base from the RNA, forming a covalent enzyme-RNA intermediate. The proton acceptor active site deprotonates the incoming PreQ1, allowing a nucleophilic attack on the C1' of the ribose to form the product. After dissociation, two additional enzymatic reactions on the tRNA convert PreQ1 to queuine (Q), resulting in the hypermodified nucleoside queuosine (7-(((4,5-cis-dihydroxy-2-cyclopenten-1-yl)amino)methyl)-7-deazaguanosine). The protein is Queuine tRNA-ribosyltransferase of Leptothrix cholodnii (strain ATCC 51168 / LMG 8142 / SP-6) (Leptothrix discophora (strain SP-6)).